Consider the following 159-residue polypeptide: Transcription elongation factor GreA (159 aa).

Residues 47-73 are a coiled coil; it reads AEYDAAREEQSLTEAHIADLENKLSTA.

The protein belongs to the GreA/GreB family.

Its function is as follows. Necessary for efficient RNA polymerase transcription elongation past template-encoded arresting sites. The arresting sites in DNA have the property of trapping a certain fraction of elongating RNA polymerases that pass through, resulting in locked ternary complexes. Cleavage of the nascent transcript by cleavage factors such as GreA or GreB allows the resumption of elongation from the new 3'terminus. GreA releases sequences of 2 to 3 nucleotides. This is Transcription elongation factor GreA from Chlorobium phaeobacteroides (strain DSM 266 / SMG 266 / 2430).